The following is a 68-amino-acid chain: MSYQEQQCKQLCQPLPVCPPPKPCSPPKCPEPCPPPKCPETCPPQPCQRKCPPVLEAPCQQKCPSKSK.

A 1; truncated repeat occupies 21-26; that stretch reads PKPCSP. The segment at 21–65 is 3.5 X 9 AA approximate tandem repeats; the sequence is PKPCSPPKCPEPCPPPKCPETCPPQPCQRKCPPVLEAPCQQKCPS. 3 consecutive repeat copies span residues 27–35, 36–44, and 45–53.

Belongs to the cornifin (SPRR) family. Not expressed in uterus.

The protein resides in the cytoplasm. In terms of biological role, cross-linked envelope protein of keratinocytes. It is a keratinocyte protein that first appears in the cell cytosol, but ultimately becomes cross-linked to membrane proteins by transglutaminase. All that results in the formation of an insoluble envelope beneath the plasma membrane. In Mus musculus (Mouse), this protein is Small proline-rich protein 2K (Sprr2k).